The sequence spans 395 residues: Succinyl-diaminopimelate desuccinylase (395 aa).

H74 provides a ligand contact to Zn(2+). Residue D76 is part of the active site. D107 serves as a coordination point for Zn(2+). Catalysis depends on E141, which acts as the Proton acceptor. Zn(2+) is bound by residues E142, E170, and H368.

Belongs to the peptidase M20A family. DapE subfamily. In terms of assembly, homodimer. Requires Zn(2+) as cofactor. Co(2+) is required as a cofactor.

The catalysed reaction is N-succinyl-(2S,6S)-2,6-diaminopimelate + H2O = (2S,6S)-2,6-diaminopimelate + succinate. Its pathway is amino-acid biosynthesis; L-lysine biosynthesis via DAP pathway; LL-2,6-diaminopimelate from (S)-tetrahydrodipicolinate (succinylase route): step 3/3. In terms of biological role, catalyzes the hydrolysis of N-succinyl-L,L-diaminopimelic acid (SDAP), forming succinate and LL-2,6-diaminopimelate (DAP), an intermediate involved in the bacterial biosynthesis of lysine and meso-diaminopimelic acid, an essential component of bacterial cell walls. The chain is Succinyl-diaminopimelate desuccinylase from Brucella abortus (strain S19).